The chain runs to 278 residues: Non-homologous end joining protein Ku (278 aa).

The 164-residue stretch at 9 to 172 (ISFGLVNIPV…MHFAQELVDV (164 aa)) folds into the Ku domain. The tract at residues 255–278 (NQTGAGAKKKPAKTAKRGKSRKAA) is disordered. Over residues 261–278 (AKKKPAKTAKRGKSRKAA) the composition is skewed to basic residues.

This sequence belongs to the prokaryotic Ku family. In terms of assembly, homodimer. Interacts with LigD.

With LigD forms a non-homologous end joining (NHEJ) DNA repair enzyme, which repairs dsDNA breaks with reduced fidelity. Binds linear dsDNA with 5'- and 3'- overhangs but not closed circular dsDNA nor ssDNA. Recruits and stimulates the ligase activity of LigD. This is Non-homologous end joining protein Ku from Opitutus terrae (strain DSM 11246 / JCM 15787 / PB90-1).